Here is a 741-residue protein sequence, read N- to C-terminus: Type VI secretion system spike protein VgrG1b (741 aa).

2 stretches are compositionally biased toward polar residues: residues 614–629 (SIGA…NETI) and 649–663 (GNQS…SRSV). Positions 614 to 678 (SIGANRSESV…TSVGKDDSLD (65 aa)) are disordered.

Belongs to the VgrG protein family.

The protein localises to the secreted. Functionally, part of the H1 type VI secretion system (H1-T6SS) specialized secretion system, which delivers several virulence factors in both prokaryotic and eukaryotic cells during infection. Allows the delivery of the Tse7 toxin to target cells where it exerts toxicity through its nuclease domain. This is Type VI secretion system spike protein VgrG1b from Pseudomonas aeruginosa (strain ATCC 15692 / DSM 22644 / CIP 104116 / JCM 14847 / LMG 12228 / 1C / PRS 101 / PAO1).